The following is a 252-amino-acid chain: 3-dehydroquinate dehydratase (252 aa).

3-dehydroquinate-binding positions include serine 21, 46–48 (EWR), and arginine 82. The Proton donor/acceptor role is filled by histidine 143. Lysine 170 functions as the Schiff-base intermediate with substrate in the catalytic mechanism. Arginine 213, serine 232, and glutamine 236 together coordinate 3-dehydroquinate.

The protein belongs to the type-I 3-dehydroquinase family. Homodimer.

The catalysed reaction is 3-dehydroquinate = 3-dehydroshikimate + H2O. The protein operates within metabolic intermediate biosynthesis; chorismate biosynthesis; chorismate from D-erythrose 4-phosphate and phosphoenolpyruvate: step 3/7. Its function is as follows. Involved in the third step of the chorismate pathway, which leads to the biosynthesis of aromatic amino acids. Catalyzes the cis-dehydration of 3-dehydroquinate (DHQ) and introduces the first double bond of the aromatic ring to yield 3-dehydroshikimate. This chain is 3-dehydroquinate dehydratase, found in Shigella dysenteriae.